Reading from the N-terminus, the 425-residue chain is MSTIVDVFAREVLDSRGNPTVEVEVFLEDGTMGRAIVPSGASTGAHEAVELRDGDSKRYLGKGVLQAVDNVNMIIAPEVIGMDATAQIDIDQLMIDLDNTPNKAKLGANAIMGVSLATARAAATHLAIPLYQYIGGVNAREIPVPMMNILNGGKHADNNVDIQEFMIVPSGAPNFAEGLRMGVEVYHSLKKVLNNKGLGSGVGDEGGFAPNLPSNEAALDLILEAIAAAGYQAGSDINLALDVAATELFKDGKYHLASSGQVLSSSEMVDFYAQMLEKYPLISLEDGLAEDDWDGWKQLTERLGSKIQLVGDDLFVTNSQRLARGIEEGVCNSILIKVNQIGTLSETLNTIEMARRAGYTCVISHRSGETEDSTIADIAVATNAGQIKTGAPARSDRVAKYNQLLRIEEELDVFAVYRGIKAFKR.

(2R)-2-phosphoglycerate is bound at residue Gln163. The Proton donor role is filled by Glu205. 3 residues coordinate Mg(2+): Asp242, Glu285, and Asp312. Residues Lys337, Arg366, Ser367, and Lys388 each contribute to the (2R)-2-phosphoglycerate site. Lys337 serves as the catalytic Proton acceptor.

It belongs to the enolase family. The cofactor is Mg(2+).

The protein resides in the cytoplasm. It is found in the secreted. The protein localises to the cell surface. It carries out the reaction (2R)-2-phosphoglycerate = phosphoenolpyruvate + H2O. It functions in the pathway carbohydrate degradation; glycolysis; pyruvate from D-glyceraldehyde 3-phosphate: step 4/5. In terms of biological role, catalyzes the reversible conversion of 2-phosphoglycerate (2-PG) into phosphoenolpyruvate (PEP). It is essential for the degradation of carbohydrates via glycolysis. The protein is Enolase of Syntrophomonas wolfei subsp. wolfei (strain DSM 2245B / Goettingen).